A 546-amino-acid polypeptide reads, in one-letter code: Chaperonin GroEL (546 aa).

Residues Thr29–Pro32, Lys50, Asp86–Thr90, Gly414, Asn478–Ala480, and Asp494 contribute to the ATP site.

It belongs to the chaperonin (HSP60) family. In terms of assembly, forms a cylinder of 14 subunits composed of two heptameric rings stacked back-to-back. Interacts with the co-chaperonin GroES.

It is found in the cytoplasm. It carries out the reaction ATP + H2O + a folded polypeptide = ADP + phosphate + an unfolded polypeptide.. Functionally, together with its co-chaperonin GroES, plays an essential role in assisting protein folding. The GroEL-GroES system forms a nano-cage that allows encapsulation of the non-native substrate proteins and provides a physical environment optimized to promote and accelerate protein folding. The sequence is that of Chaperonin GroEL from Psychrobacter arcticus (strain DSM 17307 / VKM B-2377 / 273-4).